Reading from the N-terminus, the 389-residue chain is Mitochondrial carrier homolog 1 (389 aa).

The interval 1 to 78 is disordered; it reads MGASDPEVAP…PGAPGSGDNA (78 aa). The Mitochondrial intermembrane segment spans residues 1-93; that stretch reads MGASDPEVAP…LFVALGAGVT (93 aa). A compositionally biased stretch (gly residues) spans 15-33; that stretch reads GAAGMAGAGAGAGARGGAP. Residue R29 is modified to Omega-N-methylarginine. Solcar repeat units lie at residues 81–176 and 192–280; these read TEAL…FPPD and KKVV…INAY. The chain crosses the membrane as a helical span at residues 94–104; it reads ALSHPLLYVKL. Over 105-155 the chain is Cytoplasmic; sequence LIQVGHEPMPPTLGTNVLGRKVLYLPSFFTYAKYIVQVDGKIGLFRGLSPR. Residues 156 to 176 form a helical membrane-spanning segment; the sequence is LMSNALSTVTRGSMKKVFPPD. At 177-209 the chain is on the mitochondrial intermembrane side; it reads EMEQVSNKDDMKTSLKKVVKETSYEMMMQCVSR. Residues 210–229 form a helical membrane-spanning segment; it reads MLAHPLHVISMRCMVQFVGR. Topologically, residues 230–254 are cytoplasmic; it reads EAKYSGVLSSIGKIFKEEGLLGFFV. Residues 255-279 traverse the membrane as a helical segment; sequence GLIPHLLGDVVFLWGCNLLAHFINA. At 280–322 the chain is on the mitochondrial intermembrane side; that stretch reads YLVDDSVSDTPGGLGNDQNPGSQFSQALAIRSYTKFVMGIAVS. Residues 323 to 342 form a helical membrane-spanning segment; it reads MLTYPFLLVGDLMAVNNCGL. Residues 343–371 are Cytoplasmic-facing; sequence RAGLPPYSPVFKSWIHCWKYLSVQGQLFR. Residues 372-389 form a helical membrane-spanning segment; the sequence is GSSLLFRRVSSGSCFALE.

Belongs to the mitochondrial carrier (TC 2.A.29) family. In terms of assembly, interacts with PSEN1.

Its subcellular location is the mitochondrion outer membrane. Functionally, protein insertase that mediates insertion of transmembrane proteins into the mitochondrial outer membrane. Catalyzes insertion of proteins with alpha-helical transmembrane regions, such as signal-anchored, tail-anchored and multi-pass membrane proteins. Does not mediate insertion of beta-barrel transmembrane proteins. May play a role in apoptosis. The polypeptide is Mitochondrial carrier homolog 1 (Mtch1) (Mus musculus (Mouse)).